Reading from the N-terminus, the 434-residue chain is 23S rRNA (uracil(1939)-C(5))-methyltransferase RlmD (434 aa).

A TRAM domain is found at 10–68 (RVTTRQIITVTVNDLDPFGQGVARHQGKALFVSGVLPQEQAEVVLVEDKKQYARAQVKR). 4 residues coordinate [4Fe-4S] cluster: Cys81, Cys87, Cys90, and Cys162. Residues Gln265, Phe294, Asn299, Glu315, Asn342, and Asp363 each coordinate S-adenosyl-L-methionine. Cys389 acts as the Nucleophile in catalysis.

It belongs to the class I-like SAM-binding methyltransferase superfamily. RNA M5U methyltransferase family. RlmD subfamily.

It carries out the reaction uridine(1939) in 23S rRNA + S-adenosyl-L-methionine = 5-methyluridine(1939) in 23S rRNA + S-adenosyl-L-homocysteine + H(+). Functionally, catalyzes the formation of 5-methyl-uridine at position 1939 (m5U1939) in 23S rRNA. This chain is 23S rRNA (uracil(1939)-C(5))-methyltransferase RlmD, found in Klebsiella pneumoniae (strain 342).